The sequence spans 142 residues: Histone H2B (142 aa).

A compositionally biased stretch (basic and acidic residues) spans 1–10 (MPPKPAEKKP). Residues 1–50 (MPPKPAEKKPSSTAGKAPASSAGKAPAEAAKKTSKAPAKSGEKKKATKVR) are disordered. Residues Lys8 and Lys9 each carry the N6-acetyllysine; alternate modification. Residues Lys8 and Lys9 each participate in a glycyl lysine isopeptide (Lys-Gly) (interchain with G-Cter in SUMO); alternate cross-link. Residues 11 to 28 (SSTAGKAPASSAGKAPAE) are compositionally biased toward low complexity. N6-acetyllysine is present on Lys24. Residues 40–50 (SGEKKKATKVR) show a composition bias toward basic and acidic residues. Residue Lys137 forms a Glycyl lysine isopeptide (Lys-Gly) (interchain with G-Cter in ubiquitin) linkage.

Belongs to the histone H2B family. As to quaternary structure, the nucleosome is a histone octamer containing two molecules each of H2A, H2B, H3 and H4 assembled in one H3-H4 heterotetramer and two H2A-H2B heterodimers. The octamer wraps approximately 147 bp of DNA. In terms of processing, monoubiquitinated by the UBC2-BRE1 complex to form H2BK123ub1. H2BK123ub1 gives a specific tag for epigenetic transcriptional activation and is also prerequisite for H3K4me and H3K79me formation. H2BK123ub1 also modulates the formation of double-strand breaks during meiosis and is a prerequisite for DNA-damage checkpoint activation. Acetylation of N-terminal lysines and particularly formation of H2BK11ac has a positive effect on transcription. Post-translationally, sumoylation to form H2BK6su or H2BK7su occurs preferentially near the telomeres and represses gene transcription.

It is found in the nucleus. Its subcellular location is the chromosome. In terms of biological role, core component of nucleosome. Nucleosomes wrap and compact DNA into chromatin, limiting DNA accessibility to the cellular machineries which require DNA as a template. Histones thereby play a central role in transcription regulation, DNA repair, DNA replication and chromosomal stability. DNA accessibility is regulated via a complex set of post-translational modifications of histones, also called histone code, and nucleosome remodeling. This Mycosarcoma maydis (Corn smut fungus) protein is Histone H2B (HTB1).